Consider the following 311-residue polypeptide: Glycosyltransferase 6 domain-containing protein 1 (311 aa).

Over 1–5 (MKAKR) the chain is Cytoplasmic. A helical; Signal-anchor for type II membrane protein membrane pass occupies residues 6 to 26 (RILLQLLTFCLFLLLLAKIHF). At 27–311 (RNHQEEELLL…KIAHHPIDTL (285 aa)) the chain is on the lumenal side. N-linked (GlcNAc...) asparagine glycosylation occurs at Asn77. Substrate-binding positions include 85 to 90 (FAVGSL), 176 to 178 (NIN), and 198 to 201 (HPWW). The active-site Nucleophile is the Glu266.

Belongs to the glycosyltransferase 6 family. The cofactor is Mn(2+).

It localises to the membrane. In Mus musculus (Mouse), this protein is Glycosyltransferase 6 domain-containing protein 1 (Glt6d1).